The primary structure comprises 388 residues: Ferrochelatase (388 aa).

Residues H197 and E278 each coordinate Fe cation.

It belongs to the ferrochelatase family.

It localises to the cytoplasm. It carries out the reaction heme b + 2 H(+) = protoporphyrin IX + Fe(2+). The protein operates within porphyrin-containing compound metabolism; protoheme biosynthesis; protoheme from protoporphyrin-IX: step 1/1. Catalyzes the ferrous insertion into protoporphyrin IX. This chain is Ferrochelatase, found in Thermosynechococcus vestitus (strain NIES-2133 / IAM M-273 / BP-1).